We begin with the raw amino-acid sequence, 410 residues long: D-amino acid dehydrogenase (410 aa).

9–14 lines the FAD pocket; it reads GGGIVG.

The protein belongs to the DadA oxidoreductase family. Requires FAD as cofactor.

It localises to the cell inner membrane. It carries out the reaction a D-alpha-amino acid + a quinone + H2O = a 2-oxocarboxylate + a quinol + NH4(+). Functionally, catalyzes the oxidative deamination of D-amino acids. Has broad substrate specificity; is mostly active on D-proline, and to a lesser extent, on several other D-amino acids such as D-alanine, D-phenylalanine and D-serine. Mediates electron transport from D-proline to coenzyme Q1 in vitro, and is involved in the electron transport chain from D-proline to the c-type cytochrome in vivo. This chain is D-amino acid dehydrogenase, found in Helicobacter pylori (strain ATCC 700392 / 26695) (Campylobacter pylori).